Here is a 243-residue protein sequence, read N- to C-terminus: 2-O-methyltransferase NoeI (243 aa).

The protein belongs to the FkbM methyltransferase family.

The protein localises to the cytoplasm. In terms of biological role, required for 2-O-methylation of the fucosyl group of Nod factors. This Sinorhizobium fredii (strain NBRC 101917 / NGR234) protein is 2-O-methyltransferase NoeI (noeI).